The primary structure comprises 500 residues: E3 ubiquitin-protein ligase TRIM4 (500 aa).

The RING-type zinc finger occupies 12–53 (CPICLDYFQDPVSIECGHNFCRGCLHRNWAPGGGPFPCPECR). Residues 82-123 (VPPGLCGRHWEPLRLFCEDDQRPVCLVCRESQEHQTHAMAPI) form a B box-type zinc finger. 4 residues coordinate Zn(2+): cysteine 87, histidine 90, cysteine 109, and histidine 115. Residues 212–253 (EEEDLFLQRLNKEEEETKKKLNENTLKLNQTIASLKKLILEV) adopt a coiled-coil conformation. Positions 288-500 (KVKTVCQIPL…LVIPPVTDRK (213 aa)) constitute a B30.2/SPRY domain.

It belongs to the TRIM/RBCC family. In terms of assembly, homotrimer.

Its subcellular location is the cytoplasm. It catalyses the reaction S-ubiquitinyl-[E2 ubiquitin-conjugating enzyme]-L-cysteine + [acceptor protein]-L-lysine = [E2 ubiquitin-conjugating enzyme]-L-cysteine + N(6)-ubiquitinyl-[acceptor protein]-L-lysine.. It participates in protein modification; protein ubiquitination. E3 ubiquitin-protein ligase. Mediates 'Lys-63'-linked polyubiquitination of the innate immune receptor RIGI, this linkage doesn't lead to proteasomal degradation but seems to enhance IFN induction. This Homo sapiens (Human) protein is E3 ubiquitin-protein ligase TRIM4 (TRIM4).